The sequence spans 53 residues: Photosystem II reaction center protein K (53 aa).

The propeptide occupies 1 to 16; it reads MLKFYLENVFHLIFFA. The chain crosses the membrane as a helical span at residues 28–48; the sequence is IVNVMPIIPLFFFLLAFVWQA.

The protein belongs to the PsbK family. In terms of assembly, PSII is composed of 1 copy each of membrane proteins PsbA, PsbB, PsbC, PsbD, PsbE, PsbF, PsbH, PsbI, PsbJ, PsbK, PsbL, PsbM, PsbT, PsbX, PsbY, PsbZ, Psb30/Ycf12, at least 3 peripheral proteins of the oxygen-evolving complex and a large number of cofactors. It forms dimeric complexes.

Its subcellular location is the plastid. It localises to the chloroplast thylakoid membrane. In terms of biological role, one of the components of the core complex of photosystem II (PSII). PSII is a light-driven water:plastoquinone oxidoreductase that uses light energy to abstract electrons from H(2)O, generating O(2) and a proton gradient subsequently used for ATP formation. It consists of a core antenna complex that captures photons, and an electron transfer chain that converts photonic excitation into a charge separation. The chain is Photosystem II reaction center protein K from Huperzia lucidula (Shining clubmoss).